The primary structure comprises 444 residues: Transposase for insertion sequence element IS1557 (444 aa).

The disordered stretch occupies residues 273–292 (PKWGRGRPGKNAAPRPGRER).

The protein belongs to the transposase 12 family.

The sequence is that of Transposase for insertion sequence element IS1557 from Mycobacterium tuberculosis (strain CDC 1551 / Oshkosh).